Consider the following 176-residue polypeptide: NAD(P)H-quinone oxidoreductase subunit 6, chloroplastic (176 aa).

The next 5 membrane-spanning stretches (helical) occupy residues 10–30, 32–52, 61–81, 92–112, and 152–172; these read ILLV…ILLT, TIYS…FYIL, AQLL…VMFM, IWTV…FSLI, and FILP…GAIA.

The protein belongs to the complex I subunit 6 family. As to quaternary structure, NDH is composed of at least 16 different subunits, 5 of which are encoded in the nucleus.

The protein resides in the plastid. Its subcellular location is the chloroplast thylakoid membrane. The catalysed reaction is a plastoquinone + NADH + (n+1) H(+)(in) = a plastoquinol + NAD(+) + n H(+)(out). It catalyses the reaction a plastoquinone + NADPH + (n+1) H(+)(in) = a plastoquinol + NADP(+) + n H(+)(out). Its function is as follows. NDH shuttles electrons from NAD(P)H:plastoquinone, via FMN and iron-sulfur (Fe-S) centers, to quinones in the photosynthetic chain and possibly in a chloroplast respiratory chain. The immediate electron acceptor for the enzyme in this species is believed to be plastoquinone. Couples the redox reaction to proton translocation, and thus conserves the redox energy in a proton gradient. This Piper cenocladum (Ant piper) protein is NAD(P)H-quinone oxidoreductase subunit 6, chloroplastic (ndhG).